The following is a 395-amino-acid chain: S-adenosylmethionine synthase (395 aa).

Residue His15 participates in ATP binding. Asp17 is a binding site for Mg(2+). A K(+)-binding site is contributed by Glu43. Gln99 provides a ligand contact to L-methionine. The flexible loop stretch occupies residues 99–109; it reads QSPDIAMGVNE. ATP-binding positions include 174–176, 240–241, Asp249, 255–256, Ala272, and Lys276; these read DGK, RF, and RK. Residue Asp249 participates in L-methionine binding. L-methionine is bound at residue Lys280.

Belongs to the AdoMet synthase family. As to quaternary structure, homotetramer; dimer of dimers. Mg(2+) is required as a cofactor. K(+) serves as cofactor.

The protein resides in the cytoplasm. The catalysed reaction is L-methionine + ATP + H2O = S-adenosyl-L-methionine + phosphate + diphosphate. It participates in amino-acid biosynthesis; S-adenosyl-L-methionine biosynthesis; S-adenosyl-L-methionine from L-methionine: step 1/1. Catalyzes the formation of S-adenosylmethionine (AdoMet) from methionine and ATP. The overall synthetic reaction is composed of two sequential steps, AdoMet formation and the subsequent tripolyphosphate hydrolysis which occurs prior to release of AdoMet from the enzyme. The polypeptide is S-adenosylmethionine synthase (Moorella thermoacetica (strain ATCC 39073 / JCM 9320)).